We begin with the raw amino-acid sequence, 263 residues long: Protein MARD1 (263 aa).

The FLZ-type zinc finger occupies 219–263 (SFLSRCFTCKKNLDQKQDIYIYRGEKGFCSSECRYQEMLLDQMET).

Belongs to the FLZ family. Interacts with KIN10 and KIN11 via its FLZ-type zinc finger domain. Interacts with KINB1 and KINB2 via its N-terminal part. Interacts with TZF4, TZF5 and TZF6. Interacts with MPK3 and MPK6.

The protein localises to the cytoplasm. It is found in the stress granule. Its subcellular location is the P-body. Its function is as follows. May act as an adapter to facilitate the interaction of SnRK1 complex with effector proteins, conferring tissue- and stimulus-type specific differences in the SnRK1 regulation pathway. Involved in seed dormancy control. This Arabidopsis thaliana (Mouse-ear cress) protein is Protein MARD1.